A 387-amino-acid chain; its full sequence is MSVIKMTDLDLSGKRVFIRADLNVPVKDGKVTSDARIRATIPTLKLALEKGAKVMVTSHLGRPTEGEFDEANSLKPVVDYLNANLDVPVRLVRDYLDGVDVNQGEIVVLENVRINKGEKKNDPELGKKYAALCDVFVMDAFGTAHRAQASTYGVAEYAPVACAGPLLAAELDALGKALKEPARPMVAIVGGSKVSTKLEVLNSLSKIADQIIVGGGIANTFIAAAGHNVGKSLYEEDLIPVAKNLAASTDIPVPVDVRVGLEFSETAAATEKAVNEVKDDESIFDIGDKSAEQLAEIIKNAKTILWNGPVGVFEFPNFRKGTEIISHAIANSEGFSIAGGGDTLAAIDLFGIKDKISYISTGGGAFLEFVEGKVLPAVEILEKRANG.

Residues 21-23 (DLN), Arg36, 59-62 (HLGR), Arg113, and Arg146 contribute to the substrate site. Residues Lys197, Glu314, and 340 to 343 (GGDT) contribute to the ATP site.

It belongs to the phosphoglycerate kinase family. As to quaternary structure, monomer.

Its subcellular location is the cytoplasm. The enzyme catalyses (2R)-3-phosphoglycerate + ATP = (2R)-3-phospho-glyceroyl phosphate + ADP. It functions in the pathway carbohydrate degradation; glycolysis; pyruvate from D-glyceraldehyde 3-phosphate: step 2/5. This Pasteurella multocida (strain Pm70) protein is Phosphoglycerate kinase (pgk).